The sequence spans 180 residues: Interleukin-1-binding protein (180 aa).

The N-terminal stretch at Met1–Thr20 is a signal peptide. N-linked (GlcNAc...) asparagine; by host glycans are attached at residues Asn80, Asn103, and Asn113.

Belongs to the interleukin-1 receptor family. In terms of assembly, interacts with mouse Il1b.

The protein localises to the secreted. May reduce the host inflammatory response by interacting with inteleukin-1 beta (Il1b) and thus decreasing the association between IL1B and its cellular receptor. This is Interleukin-1-binding protein (OPG201) from Monkeypox virus.